The primary structure comprises 320 residues: Polyprenal reductase 1 (320 aa).

A run of 6 helical transmembrane segments spans residues 5–25, 64–84, 143–163, 200–220, 243–263, and 266–286; these read IVWL…LPLV, FFGH…AATW, MHIL…LSLC, PLMK…WGWI, IIPY…AEIV, and LGLL…FGFV.

The protein belongs to the steroid 5-alpha reductase family. Polyprenal reductase subfamily. Expressed in roots and flowers.

It is found in the cell membrane. It carries out the reaction a di-trans,poly-cis-dolichal + NADP(+) = a di-trans,poly-cis-polyprenal + NADPH + H(+). The protein operates within protein modification; protein glycosylation. Its function is as follows. Plays a key role in early steps of protein N-linked glycosylation by being involved in the conversion of polyprenol into dolichol. Acts as a polyprenal reductase that mediates the reduction of polyprenal into dolichal in a NADP-dependent mechanism. Dolichols are required for the synthesis of dolichol-linked monosaccharides and the oligosaccharide precursor used for N-glycosylation. Involved in the regulation of plant growth and reproductive processes. The protein is Polyprenal reductase 1 of Arabidopsis thaliana (Mouse-ear cress).